We begin with the raw amino-acid sequence, 162 residues long: Peptide methionine sulfoxide reductase MsrA (162 aa).

Cys-16 is a catalytic residue.

Belongs to the MsrA Met sulfoxide reductase family.

The catalysed reaction is L-methionyl-[protein] + [thioredoxin]-disulfide + H2O = L-methionyl-(S)-S-oxide-[protein] + [thioredoxin]-dithiol. The enzyme catalyses [thioredoxin]-disulfide + L-methionine + H2O = L-methionine (S)-S-oxide + [thioredoxin]-dithiol. Functionally, has an important function as a repair enzyme for proteins that have been inactivated by oxidation. Catalyzes the reversible oxidation-reduction of methionine sulfoxide in proteins to methionine. This is Peptide methionine sulfoxide reductase MsrA from Geobacter sulfurreducens (strain ATCC 51573 / DSM 12127 / PCA).